Reading from the N-terminus, the 506-residue chain is RNA-splicing ligase RtcB homolog (506 aa).

The Mn(2+) site is built by aspartate 120, cysteine 123, histidine 228, histidine 260, and histidine 354. Residue 227–231 (NHYAE) coordinates GMP. GMP is bound by residues 354–355 (HN), 403–406 (GGSM), serine 410, 429–432 (HGAG), and lysine 505. The GMP-histidine intermediate role is filled by histidine 429.

This sequence belongs to the RtcB family. In terms of assembly, catalytic component of the tRNA-splicing ligase complex. Mn(2+) serves as cofactor.

It carries out the reaction a 3'-end 3'-phospho-ribonucleotide-RNA + a 5'-end dephospho-ribonucleoside-RNA + GTP = a ribonucleotidyl-ribonucleotide-RNA + GMP + diphosphate. The catalysed reaction is a 3'-end 2',3'-cyclophospho-ribonucleotide-RNA + a 5'-end dephospho-ribonucleoside-RNA + GTP + H2O = a ribonucleotidyl-ribonucleotide-RNA + GMP + diphosphate + H(+). Catalytic subunit of the tRNA-splicing ligase complex that acts by directly joining spliced tRNA halves to mature-sized tRNAs by incorporating the precursor-derived splice junction phosphate into the mature tRNA as a canonical 3',5'-phosphodiester. May act as an RNA ligase with broad substrate specificity, and may function toward other RNAs. This is RNA-splicing ligase RtcB homolog from Anopheles gambiae (African malaria mosquito).